The chain runs to 248 residues: Large ribosomal subunit protein uL4 (248 aa).

Disordered stretches follow at residues 48 to 96 and 210 to 248; these read GTHK…PVPR and AFSE…RTGA. The segment covering 233-248 has biased composition (basic and acidic residues); sequence DATKARSSRHDDRTGA.

The protein belongs to the universal ribosomal protein uL4 family. Part of the 50S ribosomal subunit.

One of the primary rRNA binding proteins, this protein initially binds near the 5'-end of the 23S rRNA. It is important during the early stages of 50S assembly. It makes multiple contacts with different domains of the 23S rRNA in the assembled 50S subunit and ribosome. Its function is as follows. Forms part of the polypeptide exit tunnel. The sequence is that of Large ribosomal subunit protein uL4 from Tropheryma whipplei (strain Twist) (Whipple's bacillus).